We begin with the raw amino-acid sequence, 212 residues long: uncharacterized protein (212 aa).

The protein belongs to the methyltransferase superfamily.

This is an uncharacterized protein from Synechocystis sp. (strain ATCC 27184 / PCC 6803 / Kazusa).